Here is a 126-residue protein sequence, read N- to C-terminus: Phosphoribosyl-AMP cyclohydrolase (126 aa).

Mg(2+) is bound at residue Asp-73. Cys-74 is a binding site for Zn(2+). Mg(2+) is bound by residues Asp-75 and Asp-77. Zn(2+) is bound by residues Cys-91 and Cys-98.

This sequence belongs to the PRA-CH family. As to quaternary structure, homodimer. Mg(2+) serves as cofactor. It depends on Zn(2+) as a cofactor.

The protein localises to the cytoplasm. The catalysed reaction is 1-(5-phospho-beta-D-ribosyl)-5'-AMP + H2O = 1-(5-phospho-beta-D-ribosyl)-5-[(5-phospho-beta-D-ribosylamino)methylideneamino]imidazole-4-carboxamide. It functions in the pathway amino-acid biosynthesis; L-histidine biosynthesis; L-histidine from 5-phospho-alpha-D-ribose 1-diphosphate: step 3/9. In terms of biological role, catalyzes the hydrolysis of the adenine ring of phosphoribosyl-AMP. The polypeptide is Phosphoribosyl-AMP cyclohydrolase (Solibacter usitatus (strain Ellin6076)).